The following is a 264-amino-acid chain: Short chain dehydrogenase/reductase dmxR18 (264 aa).

Residues isoleucine 24, aspartate 70, asparagine 97, and arginine 130 each contribute to the NADP(+) site. Active-site proton donor residues include serine 146 and serine 147. NADP(+) contacts are provided by tyrosine 161, lysine 165, and threonine 196. Tyrosine 161 serves as the catalytic Proton acceptor. Lysine 165 functions as the Lowers pKa of active site Tyr in the catalytic mechanism.

Belongs to the short-chain dehydrogenases/reductases (SDR) family.

The catalysed reaction is 3,8,9,10-tetrahydroxy-6-methyl-1,4-dihydroanthracen-1-one + NADPH + H(+) = (3R)-3,8,9,10-tetrahydroxy-6-methyl-1,2,3,4-tetrahydroanthracen-1-one + NADP(+). The protein operates within secondary metabolite biosynthesis. Its function is as follows. Short chain dehydrogenase/reductase; part of the gene cluster that mediates the biosynthesis of the dimeric xanthones cryptosporioptides. The pathway begins with the synthesis of atrochrysone thioester by the polyketide synthase dmx-nrPKS. The atrochrysone carboxyl ACP thioesterase dmxR1 then breaks the thioester bond and releases the atrochrysone carboxylic acid from dmx-nrPKS. Atrochrysone carboxylic acid is decarboxylated by the decarboxylase dmxR15, and oxidized by the anthrone oxygenase dmxR16 to yield emodin. Emodin is then reduced to emodin hydroquinone by the oxidoreductase dmxR7. A-ring reduction by the short chain dehydrogenase dmxR18, dehydration by the scytalone dehydratase-like protein dmxR17 and probable spontaneous re-oxidation, results in overall deoxygenation to chrysophanol. Baeyer-Villiger oxidation by the Baeyer-Villiger monooxygenase (BVMO) dmxR6 then yields monodictylactone in equilibrium with monodictyphenone. In the case of the cryptosporioptides biosynthesis, monodictylactone is reduced at C-12 to an alcohol (by the short chain dehydrogenases dmxR12 or dmxR8) and hydroxylated at C-5 by dmxR9, yielding the electron-rich aromatic which could eliminate H(2)O to form the ortho-quinonemethide, followed by tautomerisation to paraquinone and complete the formal reduction to produce the 10-methylgroup. Conjugate addition of C-4a-OH to the resulting paraquinone by the monooxygenase dmxR10 then gives cyclohexadienone, which is then reduced at C-5 by the short chain dehydrogenase dmxR3 to give the dihydroxanthone. The 6,7-epoxide in the cryptosporioptides could be introduced by the cytochrome P450 monooxygenase dmxL3. The highly reducing PKS dmxL2 manufactures butyrate, which is further carboxylated by dmxL1 to form ethylmalonate. It is not yet clear whether the carboxylation occurs while the butyrate is attached to the ACP of dmxL2, but this unusual fungal metabolite could then be esterified to O-5 by the O-acetyltransferase dmxR13. Finally, dimerization performed by dmxR5 gives the observed dimers cryptosporioptides A, B and C as the final products of the pathway. In Cryptosporiopsis sp. (strain 8999), this protein is Short chain dehydrogenase/reductase dmxR18.